We begin with the raw amino-acid sequence, 148 residues long: 3-dehydroquinate dehydratase (148 aa).

Tyr-24 serves as the catalytic Proton acceptor. Substrate contacts are provided by Asn-80, His-86, and Asp-93. The Proton donor role is filled by His-106. Substrate is bound by residues 107 to 108 (IS) and Arg-117.

This sequence belongs to the type-II 3-dehydroquinase family. As to quaternary structure, homododecamer.

The catalysed reaction is 3-dehydroquinate = 3-dehydroshikimate + H2O. It functions in the pathway metabolic intermediate biosynthesis; chorismate biosynthesis; chorismate from D-erythrose 4-phosphate and phosphoenolpyruvate: step 3/7. Functionally, catalyzes a trans-dehydration via an enolate intermediate. This is 3-dehydroquinate dehydratase from Acidovorax ebreus (strain TPSY) (Diaphorobacter sp. (strain TPSY)).